Here is a 723-residue protein sequence, read N- to C-terminus: Choline transporter-like protein 4 (723 aa).

Over 1 to 36 (MGKKKQEEEQNSSEYGAPAQYDPTFNGPIHKRSCTD) the chain is Cytoplasmic. Residues 37–57 (IICCVLFMLVITGYMVVGILA) traverse the membrane as a helical segment. Over 58–245 (WLYGDPRHVL…RIFEDFAKTW (188 aa)) the chain is Extracellular. 4 N-linked (GlcNAc...) asparagine glycosylation sites follow: Asn71, Asn202, Asn211, and Asn219. The helical transmembrane segment at 246 to 266 (QWIVAGLVIAMVVSVLFLLLL) threads the bilayer. Residues 267–269 (RFT) lie on the Cytoplasmic side of the membrane. Residues 270–290 (APVLIWILIFGVLAVGAFGIW) form a helical membrane-spanning segment. Residues 291 to 325 (YCYNDYMSLASSNLTFSNVGFTTNVQVYLQVRDTW) are Extracellular-facing. N-linked (GlcNAc...) asparagine glycosylation is present at Asn303. The helical transmembrane segment at 326-346 (LAFLIILCIVEAVLILALIFL) threads the bilayer. Residues 347–374 (RTRILIAIALIQETSKALGHMMSTLLYP) lie on the Cytoplasmic side of the membrane. A helical membrane pass occupies residues 375-395 (VVTFVLLLVCVSYWGITALYL). The Extracellular segment spans residues 396-464 (ATSGAPIYKV…RNLFNLQIYN (69 aa)). 3 N-linked (GlcNAc...) asparagine glycosylation sites follow: Asn409, Asn421, and Asn430. A helical transmembrane segment spans residues 465-485 (VVAFLWCVNFVIALGHCTLAG). At 486-516 (AFASYYWAFSKPADIPTFPLTQSFMRALRYH) the chain is on the cytoplasmic side. A helical membrane pass occupies residues 517-537 (VGSLAFGALILTLVQIVRIIL). Topologically, residues 538–578 (EYLDHKFKAAQNPCARFLMCCLKCCFWCLEKFIKFINRNAY) are extracellular. The chain crosses the membrane as a helical span at residues 579 to 599 (IMIAIYGKNFCVSAKNAFFLL). Residues 600–615 (MRNIVRVVVLDKVTDL) lie on the Cytoplasmic side of the membrane. The helical transmembrane segment at 616 to 636 (LLFFGKLLVVGGIGVLAFFFF) threads the bilayer. Residues 637-655 (SGRIQLPGNTFQTAALNYY) are Extracellular-facing. The helical transmembrane segment at 656-676 (WMPIITVVFGAYLIAHGFFSV) threads the bilayer. Residues 677-723 (YNMGVDTLFLCFLEDLERNDGSAEKPYFMSKNLMKILNKKNKQPKTG) lie on the Cytoplasmic side of the membrane.

Belongs to the CTL (choline transporter-like) family.

It localises to the membrane. The protein localises to the apical cell membrane. It carries out the reaction choline(out) + n H(+)(in) = choline(in) + n H(+)(out). The enzyme catalyses thiamine diphosphate(out) = thiamine diphosphate(in). Its function is as follows. Choline transporter that seems to play a role in the choline-acetylcholine system and is required to the efferent innervation of hair cells in the olivocochlear bundle for the maintenance of physiological function of outer hair cells and the protection of hair cells from acoustic injury. Also described as a thiamine pyrophosphate transporter. The chain is Choline transporter-like protein 4 (slc44a4) from Danio rerio (Zebrafish).